Consider the following 86-residue polypeptide: Antitoxin VapB33 (86 aa).

Its function is as follows. Antitoxin component of a type II toxin-antitoxin (TA) system. Upon expression in M.smegmatis neutralizes the effect of cognate toxin VapC33. This chain is Antitoxin VapB33 (vapB33), found in Mycobacterium tuberculosis (strain ATCC 25618 / H37Rv).